The following is a 235-amino-acid chain: Probable membrane-associated kinase regulator 6 (235 aa).

Positions 108 to 140 are disordered; that stretch reads SAATEEESEPLDTTTSEKIDTRGLNSKPSPTSS. The segment covering 130 to 140 has biased composition (polar residues); the sequence is GLNSKPSPTSS.

It is found in the cell membrane. May be involved in abscisic acid signaling by acting as a kinase regulator. The polypeptide is Probable membrane-associated kinase regulator 6 (MAKR6) (Arabidopsis thaliana (Mouse-ear cress)).